Consider the following 199-residue polypeptide: Fe/S biogenesis protein NfuA (199 aa).

Residues Cys151 and Cys154 each contribute to the [4Fe-4S] cluster site.

It belongs to the NfuA family. Homodimer. Requires [4Fe-4S] cluster as cofactor.

Its function is as follows. Involved in iron-sulfur cluster biogenesis. Binds a 4Fe-4S cluster, can transfer this cluster to apoproteins, and thereby intervenes in the maturation of Fe/S proteins. Could also act as a scaffold/chaperone for damaged Fe/S proteins. This is Fe/S biogenesis protein NfuA from Stenotrophomonas maltophilia (strain K279a).